Here is a 419-residue protein sequence, read N- to C-terminus: Divergent protein kinase domain 1C (419 aa).

The Cytoplasmic portion of the chain corresponds to 1 to 22 (MARAAGARGPAGWCRRRGRCGR). Positions 16 to 17 (RR) match the May mediate ER retention motif. Residues 23 to 43 (GTLLAFAAWTAGWVLAAALLL) form a helical membrane-spanning segment. At 44–419 (RAHPGVLSER…TLRELQEAEK (376 aa)) the chain is on the lumenal side.

This sequence belongs to the DIPK family. In terms of processing, among the many cysteines in the lumenal domain, most are probably involved in disulfide bonds.

The protein localises to the endoplasmic reticulum membrane. This chain is Divergent protein kinase domain 1C, found in Homo sapiens (Human).